The primary structure comprises 546 residues: High-affinity glucose transporter ght5 (546 aa).

Residues 1-9 (MGKNLTIVM) are Cytoplasmic-facing. A helical transmembrane segment spans residues 10–30 (LVFVSMAGWMFGADTGSIGGI). Residues 31–58 (TNMRDFQSRFADRYNPVTDSYSYSSARQ) are Extracellular-facing. Residues 59-79 (GLITGMVNVGSFFGCFLSSPL) traverse the membrane as a helical segment. Over 80–87 (MDRIGKRT) the chain is Cytoplasmic. A helical transmembrane segment spans residues 88–108 (SIMFWTIVYLIGIILQVTAVP). Topologically, residues 109-112 (SWVQ) are extracellular. A helical transmembrane segment spans residues 113 to 133 (IMVAKIWTGLSIGALSVLAPG). At 134-144 (FQSEVAPADLR) the chain is on the cytoplasmic side. A helical membrane pass occupies residues 145 to 165 (GTIVTTYQLAVTGGIFIAACI). The Extracellular segment spans residues 166–179 (NMGTHKLHKTAQWR). Residues 180 to 200 (VSMGINLLWGIITFIGISFLP) traverse the membrane as a helical segment. Over 201 to 266 (ESPRYLISVG…IFGPDIRYRT (66 aa)) the chain is Cytoplasmic. A helical transmembrane segment spans residues 267-285 (FLGLGVMSLQQLTGDNYYF). Over 286–301 (YYGFEVFEGTGMNSPY) the chain is Extracellular. Residues 302–322 (LSALILDAVNFGCTFGGLFVL) form a helical membrane-spanning segment. At 323–328 (EFFGRR) the chain is on the cytoplasmic side. Residues 329–349 (MPLIIGALWQSITFFIYAAVG) traverse the membrane as a helical segment. The Extracellular segment spans residues 350 to 363 (NRALTRKNGTSNHR). N-linked (GlcNAc...) asparagine glycosylation occurs at Asn357. A helical membrane pass occupies residues 364-384 (AGAVMIVFSCLFIFSFAQTWG). Residues 385 to 404 (PAAYVIVGESYPIRYRSKCA) lie on the Cytoplasmic side of the membrane. The helical transmembrane segment at 405-425 (AVATTGNWLWGFLISFFTPFI) threads the bilayer. Residues 426–432 (TNSIGFK) are Extracellular-facing. The helical transmembrane segment at 433–453 (YGYIFAACNLCAACIIFLFAH) threads the bilayer. Residues 454-546 (ETKGLTLEEI…SYHDQEEQFA (93 aa)) lie on the Cytoplasmic side of the membrane. Residues 486 to 546 (KQQEEVREKS…SYHDQEEQFA (61 aa)) are disordered. Positions 487 to 496 (QQEEVREKSR) are enriched in basic and acidic residues. The span at 509 to 519 (VDGEEGIEDSS) shows a compositional bias: acidic residues. Positions 520-529 (NDISSTTSSD) are enriched in low complexity. 2 positions are modified to phosphoserine: Ser528 and Ser537. Residues 530–546 (GRAKPESSYHDQEEQFA) show a composition bias toward basic and acidic residues.

This sequence belongs to the major facilitator superfamily. Sugar transporter (TC 2.A.1.1) family.

The protein resides in the membrane. Functionally, high-affinity glucose transporter. This chain is High-affinity glucose transporter ght5 (ght5), found in Schizosaccharomyces pombe (strain 972 / ATCC 24843) (Fission yeast).